We begin with the raw amino-acid sequence, 147 residues long: uncharacterized protein (147 aa).

Disordered stretches follow at residues 1–49 (MRTP…NLNE) and 125–147 (SPSP…RKSN). Low complexity-rich tracts occupy residues 8 to 49 (NNNY…NLNE) and 125 to 140 (SPSP…PQNT).

This is an uncharacterized protein from Dictyostelium discoideum (Social amoeba).